The chain runs to 272 residues: MSLEKISNPQKYISHHLNHLQIDLCNFKFVEPGKIVSHFWVLNIDSIIFSLVLGCFFLSIFYTVAKKITTGVPNGLQASIELIFDFIRSNVKSMYQGKNPLIAPLSLTVFVWVFLMNLMDLIPIDFFPFISERFFHFPAMRIVPSADINITLSMSLGVFILILFYSVKMKGLIGFCKELTLQPFNHPVFFIFNFLLELVSLLSKPISLGLRLFGNMYSGEMIFILIAGLLPWWSQFFLNVPWAIFHILIISLQAFIFMVLTIVYLSMASQSH.

The next 6 helical transmembrane spans lie at valine 41–phenylalanine 61, phenylalanine 110–isoleucine 130, valine 143–tyrosine 165, valine 188–leucine 208, isoleucine 222–tryptophan 242, and alanine 243–valine 263.

Belongs to the ATPase A chain family. In terms of assembly, F-type ATPases have 2 components, CF(1) - the catalytic core - and CF(0) - the membrane proton channel. CF(1) has five subunits: alpha(3), beta(3), gamma(1), delta(1), epsilon(1). CF(0) has three main subunits: a(1), b(2) and c(9-12). The alpha and beta chains form an alternating ring which encloses part of the gamma chain. CF(1) is attached to CF(0) by a central stalk formed by the gamma and epsilon chains, while a peripheral stalk is formed by the delta and b chains.

The protein resides in the cell membrane. Functionally, key component of the proton channel; it plays a direct role in the translocation of protons across the membrane. The protein is ATP synthase subunit a of Buchnera aphidicola subsp. Schizaphis graminum (strain Sg).